A 439-amino-acid polypeptide reads, in one-letter code: Elongation factor 1-alpha 2 (439 aa).

Positions Lys-6–Ile-229 constitute a tr-type G domain. The G1 stretch occupies residues Gly-15–Ser-22. Gly-15–Ser-22 lines the GTP pocket. A G2 region spans residues Gly-71–Asn-75. The interval Asp-92–Gly-95 is G3. GTP is bound by residues Asp-92–His-96 and Asn-154–Asp-157. The segment at Asn-154–Asp-157 is G4. Residues Ser-193–Phe-195 are G5.

It belongs to the TRAFAC class translation factor GTPase superfamily. Classic translation factor GTPase family. EF-Tu/EF-1A subfamily.

It is found in the cytoplasm. Its function is as follows. This protein promotes the GTP-dependent binding of aminoacyl-tRNA to the A-site of ribosomes during protein biosynthesis. The chain is Elongation factor 1-alpha 2 (EFA2) from Euplotes crassus.